Here is a 106-residue protein sequence, read N- to C-terminus: ATP-dependent Clp protease adapter protein ClpS (106 aa).

The protein belongs to the ClpS family. As to quaternary structure, binds to the N-terminal domain of the chaperone ClpA.

In terms of biological role, involved in the modulation of the specificity of the ClpAP-mediated ATP-dependent protein degradation. This chain is ATP-dependent Clp protease adapter protein ClpS, found in Pseudoalteromonas atlantica (strain T6c / ATCC BAA-1087).